The chain runs to 491 residues: Synaptotagmin-9 (491 aa).

The Vesicular portion of the chain corresponds to 1-52 (MPGARDALCHQALQLLAELCARGALEHDSCQDFIYHLRDRARPRLRDPDISV). Positions 9 to 31 (CHQALQLLAELCARGALEHDSCQ) are cysteine motif. A helical membrane pass occupies residues 53–73 (SLLTLVVTACGLALFGVSLFV). At 74–491 (SWKLCWVPWR…AHWHSLMEKR (418 aa)) the chain is on the cytoplasmic side. A compositionally biased stretch (polar residues) spans 91–104 (SKDNNQEPLNYTDT). Residues 91–147 (SKDNNQEPLNYTDTETNEQENSEDFLDPPTPCPDSSMKISHTSPDIPLSTQPGGQEN) are disordered. Residues 105-116 (ETNEQENSEDFL) are compositionally biased toward acidic residues. Residues 127-144 (MKISHTSPDIPLSTQPGG) show a composition bias toward polar residues. At Ser177 the chain carries Phosphoserine. C2 domains are found at residues 220-341 (ACGK…ILWK) and 352-485 (DLGE…AHWH). Residues Asp251, Asp257, Asp309, Phe310, Asp311, Ser314, Asp317, Asp383, Asp389, Asp443, and Asp445 each contribute to the Ca(2+) site.

Belongs to the synaptotagmin family. In terms of assembly, homodimer; disulfide-linked via the cysteine motif. Can also form heterodimers with SYT3, SYT6, SYT7 and SYT10. Interacts with DNAJC5 and SNAP25, but not with HSC70. The interaction with DNAJC5 is stimulated tenfold in presence of calcium while the interaction with SNAP25 is inhibited. Ca(2+) is required as a cofactor.

Its subcellular location is the cytoplasmic vesicle. The protein resides in the secretory vesicle. It is found in the synaptic vesicle membrane. Its function is as follows. May be involved in Ca(2+)-dependent exocytosis of secretory vesicles through Ca(2+) and phospholipid binding to the C2 domain or may serve as Ca(2+) sensors in the process of vesicular trafficking and exocytosis. The chain is Synaptotagmin-9 (Syt9) from Mus musculus (Mouse).